Here is a 421-residue protein sequence, read N- to C-terminus: Putative nickel insertion protein (421 aa).

Belongs to the LarC family.

The sequence is that of Putative nickel insertion protein from Gloeobacter violaceus (strain ATCC 29082 / PCC 7421).